Consider the following 1182-residue polypeptide: Receptor-type guanylate cyclase gcy-19 (1182 aa).

The first 24 residues, 1-24 (MEYLLFLLLFAGFLTFLPRFLIYA), serve as a signal peptide directing secretion. At 25–507 (QITSSTTTTT…PQSFVDQYGA (483 aa)) the chain is on the extracellular side. Residues Asn-91, Asn-369, Asn-430, and Asn-453 are each glycosylated (N-linked (GlcNAc...) asparagine). Residues 508–528 (LVFAIGGVLIFAMLFVITCFF) traverse the membrane as a helical segment. Residues 529-1182 (YVMRQKRLER…FRRQETLALI (654 aa)) lie on the Cytoplasmic side of the membrane. Residues 562–849 (RMSKRSLQSG…KGNLMDHVFN (288 aa)) enclose the Protein kinase domain. One can recognise a Guanylate cyclase domain in the interval 907 to 1037 (TVFFSDVVKF…DTVNTASRME (131 aa)). Positions 1094–1164 (VSSNSGYQSD…EAKARDIHNE (71 aa)) are disordered. Residues 1142 to 1152 (SPTLSKRSVSP) are compositionally biased toward low complexity.

This sequence belongs to the adenylyl cyclase class-4/guanylyl cyclase family. As to expression, expressed in IL2 sensory neurons.

It localises to the cell membrane. The catalysed reaction is GTP = 3',5'-cyclic GMP + diphosphate. Functionally, guanylate cyclase involved in the production of the second messenger cGMP. The polypeptide is Receptor-type guanylate cyclase gcy-19 (Caenorhabditis elegans).